The sequence spans 2193 residues: Genome polyprotein (2193 aa).

The interval 1–22 (MGSQVSTQRSGSHENSNSATEG) is disordered. The N-myristoyl glycine; by host moiety is linked to residue G2. Residues 2-1503 (GSQVSTQRSG…HLNRAVLVMQ (1502 aa)) lie on the Cytoplasmic side of the membrane. The segment at 568–588 (RVADVIESSIGDSVSRALTQA) is amphipathic alpha-helix. Residues H883 and D901 each act as for protease 2A activity in the active site. 2 residues coordinate Zn(2+): C918 and C920. C972 functions as the For protease 2A activity in the catalytic mechanism. Residues C978 and H980 each coordinate Zn(2+). One can recognise an SF3 helicase domain in the interval 1216–1374 (EKRMNNYMQF…SKTDLGRLDA (159 aa)). 1240 to 1247 (GSPGTGKS) provides a ligand contact to ATP. Positions 1381, 1392, and 1397 each coordinate Zn(2+). The C4-type; degenerate zinc-finger motif lies at 1381–1397 (CSENNTANFKRCSPLVC). Residues 1504 to 1519 (SIATVVAVVSLVYVIY) lie within the membrane without spanning it. Residues 1520–2193 (KLFAGFQGAY…NLRRNWLELF (674 aa)) lie on the Cytoplasmic side of the membrane. Y1529 is subject to O-(5'-phospho-RNA)-tyrosine. The region spanning 1549 to 1727 (GPSLDFALSL…FCAGLKRSYF (179 aa)) is the Peptidase C3 domain. Residues H1588, E1619, and C1695 each act as for protease 3C activity in the active site. A RdRp catalytic domain is found at 1958–2073 (GSLFAFDYSG…ASYPFPIDCL (116 aa)). Residues D1964 and D2060 each coordinate Mg(2+).

It belongs to the picornaviruses polyprotein family. In terms of assembly, interacts with capsid protein VP1 and capsid protein VP3 to form heterotrimeric protomers. As to quaternary structure, interacts with capsid protein VP0, and capsid protein VP3 to form heterotrimeric protomers. Five protomers subsequently associate to form pentamers which serve as building blocks for the capsid. Interacts with capsid protein VP2, capsid protein VP3 and capsid protein VP4 following cleavage of capsid protein VP0. Interacts with host SCARB2. Interacts with host ARF6; this interaction mediates viral endocytosis. Interacts with capsid protein VP1 and capsid protein VP3 in the mature capsid. Interacts with host SCARB2. In terms of assembly, interacts with capsid protein VP0 and capsid protein VP1 to form heterotrimeric protomers. Five protomers subsequently associate to form pentamers which serve as building blocks for the capsid. Interacts with capsid protein VP4 in the mature capsid. Interacts with protein 2C; this interaction may be important for virion morphogenesis. As to quaternary structure, interacts with capsid protein VP1 and capsid protein VP3. Homodimer. In terms of assembly, interacts with host BAX; this interaction activates the mitochondrial apoptotic pathway. Interacts with host ILF2. As to quaternary structure, homohexamer; forms a hexameric ring structure with 6-fold symmetry characteristic of AAA+ ATPases. Interacts (via N-terminus) with host RTN3 (via reticulon domain); this interaction is important for viral replication. Interacts with capsid protein VP3; this interaction may be important for virion morphogenesis. Interacts with protein 3CD. In terms of assembly, homodimer. Interacts with host GBF1. Interacts (via GOLD domain) with host ACBD3 (via GOLD domain); this interaction allows the formation of a viral protein 3A/ACBD3 heterotetramer with a 2:2 stoichiometry, which will stimulate the recruitment of host PI4KB in order to synthesize PI4P at the viral RNA replication sites. As to quaternary structure, interacts with RNA-directed RNA polymerase. Interacts with host IFIH1/MDA5; this interaction inhibits host IFIH1. In terms of assembly, interacts with protein 3AB and with RNA-directed RNA polymerase. As to quaternary structure, interacts with Viral protein genome-linked and with protein 3CD. Mg(2+) is required as a cofactor. Specific enzymatic cleavages in vivo by the viral proteases yield processing intermediates and the mature proteins. In terms of processing, myristoylation is required for the formation of pentamers during virus assembly. Further assembly of 12 pentamers and a molecule of genomic RNA generates the provirion. Post-translationally, during virion maturation, immature virions are rendered infectious following cleavage of VP0 into VP4 and VP2. This maturation seems to be an autocatalytic event triggered by the presence of RNA in the capsid and it is followed by a conformational change infectious virion. Myristoylation is required during RNA encapsidation and formation of the mature virus particle. In terms of processing, VPg is uridylylated by the polymerase into VPg-pUpU. This acts as a nucleotide-peptide primer for the genomic RNA replication.

The protein localises to the virion. It is found in the host cytoplasm. The protein resides in the host cytoplasmic vesicle membrane. It localises to the host nucleus. It carries out the reaction a ribonucleoside 5'-triphosphate + H2O = a ribonucleoside 5'-diphosphate + phosphate + H(+). It catalyses the reaction Selective cleavage of Tyr-|-Gly bond in the picornavirus polyprotein.. The catalysed reaction is RNA(n) + a ribonucleoside 5'-triphosphate = RNA(n+1) + diphosphate. The enzyme catalyses Selective cleavage of Gln-|-Gly bond in the poliovirus polyprotein. In other picornavirus reactions Glu may be substituted for Gln, and Ser or Thr for Gly.. Its activity is regulated as follows. Replication or transcription is subject to high level of random mutations by the nucleotide analog ribavirin. Its function is as follows. Forms an icosahedral capsid of pseudo T=3 symmetry with capsid proteins VP2 and VP3. The capsid is 300 Angstroms in diameter, composed of 60 copies of each capsid protein and enclosing the viral positive strand RNA genome. Capsid protein VP1 mainly forms the vertices of the capsid. Capsid protein VP1, together with VP2, interacts with host cell receptor SCARB2 to provide virion attachment to target host cells. This attachment induces virion internalization. After binding to its receptor, the capsid undergoes conformational changes. Capsid protein VP1 N-terminus (that contains an amphipathic alpha-helix) and capsid protein VP4 are externalized. Together, they shape a pore in the host membrane through which viral genome is translocated to host cell cytoplasm. Functionally, forms an icosahedral capsid of pseudo T=3 symmetry with capsid proteins VP2 and VP3. The capsid is 300 Angstroms in diameter, composed of 60 copies of each capsid protein and enclosing the viral positive strand RNA genome. Capsid protein VP2, together with VP1, interacts with host cell receptor SCARB2 to provide virion attachment to target host cells. In terms of biological role, forms an icosahedral capsid of pseudo T=3 symmetry with capsid proteins VP2 and VP3. The capsid is 300 Angstroms in diameter, composed of 60 copies of each capsid protein and enclosing the viral positive strand RNA genome. Lies on the inner surface of the capsid shell. After binding to the host receptor, the capsid undergoes conformational changes. Capsid protein VP4 is released, Capsid protein VP1 N-terminus is externalized, and together, they shape a pore in the host membrane through which the viral genome is translocated into the host cell cytoplasm. Its function is as follows. Component of immature procapsids, which is cleaved into capsid proteins VP4 and VP2 after maturation. Allows the capsid to remain inactive before the maturation step. Functionally, cysteine protease that cleaves viral polyprotein and specific host proteins. It is responsible for the autocatalytic cleavage between the P1 and P2 regions, which is the first cleavage occurring in the polyprotein. Also cleaves the host translation initiation factor EIF4G1, in order to shut down the capped cellular mRNA translation. Inhibits the host nucleus-cytoplasm protein and RNA trafficking by cleaving host members of the nuclear pores. Counteracts stress granule formation probably by antagonizing its assembly or promoting its dissassembly. Cleaves and inhibits host IFIH1/MDA5, thereby inhibiting the type-I IFN production and the establishment of the antiviral state. Cleaves and inhibits host MAVS, thereby inhibiting the type-I IFN production and the establishment of the antiviral state. In terms of biological role, plays an essential role in the virus replication cycle by acting as a viroporin. Creates a pore in the host endoplasmic reticulum and as a consequence releases Ca2+ in the cytoplasm of infected cell. In turn, high levels of cytoplasmic calcium may trigger membrane trafficking and transport of viral ER-associated proteins to viroplasms, sites of viral genome replication. Induces and associates with structural rearrangements of intracellular membranes. Displays RNA-binding, nucleotide binding and NTPase activities. May play a role in virion morphogenesis and viral RNA encapsidation by interacting with the capsid protein VP3. Its function is as follows. Localizes the viral replication complex to the surface of membranous vesicles. Together with protein 3CD binds the Cis-Active RNA Element (CRE) which is involved in RNA synthesis initiation. Acts as a cofactor to stimulate the activity of 3D polymerase, maybe through a nucleid acid chaperone activity. Functionally, localizes the viral replication complex to the surface of membranous vesicles. It inhibits host cell endoplasmic reticulum-to-Golgi apparatus transport and causes the disassembly of the Golgi complex, possibly through GBF1 interaction. This would result in depletion of MHC, trail receptors and IFN receptors at the host cell surface. Plays an essential role in viral RNA replication by recruiting ACBD3 and PI4KB at the viral replication sites, thereby allowing the formation of the rearranged membranous structures where viral replication takes place. In terms of biological role, acts as a primer for viral RNA replication and remains covalently bound to viral genomic RNA. VPg is uridylylated prior to priming replication into VPg-pUpU. The oriI viral genomic sequence may act as a template for this. The VPg-pUpU is then used as primer on the genomic RNA poly(A) by the RNA-dependent RNA polymerase to replicate the viral genome. During genome replication, the VPg-RNA linkage is removed by the host TDP2, thereby accelerating replication. During the late stage of the replication cycle, host TDP2 is excluded from sites of viral RNA synthesis and encapsidation, allowing for the generation of progeny virions. Involved in the viral replication complex and viral polypeptide maturation. It exhibits protease activity with a specificity and catalytic efficiency that is different from protease 3C. Protein 3CD lacks polymerase activity. Protein 3CD binds to the 5'UTR of the viral genome. Its function is as follows. Major viral protease that mediates proteolytic processing of the polyprotein. Cleaves host EIF5B, contributing to host translation shutoff. Also cleaves host PABPC1, contributing to host translation shutoff. Disassembles host cytoplasmic stress granules by cleaving host G3BP1, although this effect is less prononced than the inhibition induced by protease 2A. Cleaves host RIGI and thus contributes to the inhibition of type I interferon production. Cleaves host IRF7 and thus contributes to the inhibition of type I interferon production. Cleaves host HNRNPA1 thereby increasing the translation of apoptosis protease activating factor APAF1, leading to apoptosis of the host cell. Cleaves host NLRP1, triggers host N-glycine-mediated degradation of the autoinhibitory NLRP1 N-terminal fragment. Functionally, replicates the viral genomic RNA on the surface of intracellular membranes. May form linear arrays of subunits that propagate along a strong head-to-tail interaction called interface-I. Covalently attaches UMP to a tyrosine of VPg, which is used to prime RNA synthesis. The positive stranded RNA genome is first replicated at virus induced membranous vesicles, creating a dsRNA genomic replication form. This dsRNA is then used as template to synthesize positive stranded RNA genomes. ss(+)RNA genomes are either translated, replicated or encapsidated. The protein is Genome polyprotein of Human enterovirus 71 (strain 7423/MS/87) (EV71).